A 118-amino-acid chain; its full sequence is Secreted effector CSEP0064 (118 aa).

The N-terminal stretch at 1 to 21 (MRPFQLLSALAIFINLEAVEA) is a signal peptide. An intrachain disulfide couples C27 to C113.

In terms of assembly, interacts in planta with the pathogenesis-related protein PR10.

It is found in the secreted. It localises to the host cell. Functionally, secreted effector that increases susceptibility to infection in both monocotyledonous and dicotyledonous plants. Non-catalytic homolog of fungal RNases that binds host RNA and inhibits the degradation of host ribosomal RNA induced by ribosome-inactivating proteins (RIPs), preventing host cell death, an inviable interaction and demise of the fungus. The protein is Secreted effector CSEP0064 of Blumeria graminis f. sp. hordei (strain DH14) (Barley powdery mildew).